A 251-amino-acid chain; its full sequence is MNILFSKRLGILTIGSLLVLAGCQTSGSSAGESNQTTSSSAVEEDSSKTQEQTSDSHTHEHSHDHSHAHDEETEKIYEGYFKNSQVKDRLLSDWEGDWQSVYPYLQDGTLDEVFSYKSEHEGGKTAEEYKEYYKKGYQTDVDRIVIQKDTVTFFKNGKEYSGKYTYDGYEILTYDAGNRGVRYIFKLAKKAEGLPQYIQFSDHSIYPTKASHYHLYWGDDREALLDEVKNWPTYYPSKMDGHDIAHEMMAH.

Residues 1-30 (MNILFSKRLGILTIGSLLVLAGCQTSGSSA) form the signal peptide. A compositionally biased stretch (polar residues) spans 25 to 41 (TSGSSAGESNQTTSSSA). Residues 25-72 (TSGSSAGESNQTTSSSAVEEDSSKTQEQTSDSHTHEHSHDHSHAHDEE) are disordered. The segment covering 54–72 (SDSHTHEHSHDHSHAHDEE) has biased composition (basic and acidic residues). Residues His203, His212, His214, Glu247, and His251 each coordinate Zn(2+).

The protein belongs to the calycin superfamily. ZinT family.

The sequence is that of Probable metal-binding protein YrpE (yrpE) from Bacillus subtilis (strain 168).